Reading from the N-terminus, the 633-residue chain is DNA-directed RNA polymerase subunit beta' (633 aa).

Positions 72, 74, 87, and 90 each coordinate Zn(2+). Asp468, Asp470, and Asp472 together coordinate Mg(2+).

This sequence belongs to the RNA polymerase beta' chain family. RpoC1 subfamily. In terms of assembly, in plastids the minimal PEP RNA polymerase catalytic core is composed of four subunits: alpha, beta, beta', and beta''. When a (nuclear-encoded) sigma factor is associated with the core the holoenzyme is formed, which can initiate transcription. Requires Mg(2+) as cofactor. It depends on Zn(2+) as a cofactor.

The protein localises to the plastid. The protein resides in the chloroplast. It carries out the reaction RNA(n) + a ribonucleoside 5'-triphosphate = RNA(n+1) + diphosphate. In terms of biological role, DNA-dependent RNA polymerase catalyzes the transcription of DNA into RNA using the four ribonucleoside triphosphates as substrates. In Cyanidium caldarium (Red alga), this protein is DNA-directed RNA polymerase subunit beta'.